A 283-amino-acid polypeptide reads, in one-letter code: MELWYTEEHTDKVRFSIKVDEQLYSGKSDFQRIDVFKSQEFGTFFTLDGLMMVTEKDEFIYHDMIVHVPMATNPNIKNVLVIGAGDGGTVRELTRYETIEKIDMVEIDKLVVDVCREYLPQTANKLDDPRVSLFFEDGLKFVRSVENKYDLIIVDSTDPFGPGEGLFTREFYGNCFKALKEDGILVNQHESPYYEEYARGMKRAHKRIKECFPVCRVYQAHIPTYPSGHWLFGFASKKYDPLNADIEKWNDLGLKTKYYNTELHKGCFALPNYVKEMLENVDE.

One can recognise a PABS domain in the interval 2–237 (ELWYTEEHTD…GHWLFGFASK (236 aa)). Residue glutamine 31 coordinates S-methyl-5'-thioadenosine. Positions 62 and 86 each coordinate spermidine. S-methyl-5'-thioadenosine contacts are provided by residues glutamate 106 and 137–138 (DG). The active-site Proton acceptor is aspartate 155. 155-158 (DSTD) is a spermidine binding site. Proline 162 contacts S-methyl-5'-thioadenosine.

This sequence belongs to the spermidine/spermine synthase family. As to quaternary structure, homodimer or homotetramer.

Its subcellular location is the cytoplasm. It catalyses the reaction S-adenosyl 3-(methylsulfanyl)propylamine + putrescine = S-methyl-5'-thioadenosine + spermidine + H(+). The protein operates within amine and polyamine biosynthesis; spermidine biosynthesis; spermidine from putrescine: step 1/1. Its function is as follows. Catalyzes the irreversible transfer of a propylamine group from the amino donor S-adenosylmethioninamine (decarboxy-AdoMet) to putrescine (1,4-diaminobutane) to yield spermidine. This Clostridium perfringens (strain ATCC 13124 / DSM 756 / JCM 1290 / NCIMB 6125 / NCTC 8237 / Type A) protein is Polyamine aminopropyltransferase.